A 380-amino-acid polypeptide reads, in one-letter code: Cytochrome b (380 aa).

Transmembrane regions (helical) follow at residues 34 to 54 (FGSL…LLAA), 78 to 99 (WLIR…YMHI), 114 to 134 (WNTG…GYVL), and 179 to 199 (FFTL…IHLT). Positions 84 and 98 each coordinate heme b. Heme b is bound by residues His183 and His197. His202 serves as a coordination point for a ubiquinone. 4 helical membrane passes run 227-247 (LKDT…ALFS), 289-309 (LGGV…PLLH), 321-341 (LSQL…WVGS), and 348-368 (FIII…ILFP).

This sequence belongs to the cytochrome b family. The cytochrome bc1 complex contains 11 subunits: 3 respiratory subunits (MT-CYB, CYC1 and UQCRFS1), 2 core proteins (UQCRC1 and UQCRC2) and 6 low-molecular weight proteins (UQCRH/QCR6, UQCRB/QCR7, UQCRQ/QCR8, UQCR10/QCR9, UQCR11/QCR10 and a cleavage product of UQCRFS1). This cytochrome bc1 complex then forms a dimer. Requires heme b as cofactor.

Its subcellular location is the mitochondrion inner membrane. Functionally, component of the ubiquinol-cytochrome c reductase complex (complex III or cytochrome b-c1 complex) that is part of the mitochondrial respiratory chain. The b-c1 complex mediates electron transfer from ubiquinol to cytochrome c. Contributes to the generation of a proton gradient across the mitochondrial membrane that is then used for ATP synthesis. This chain is Cytochrome b (MT-CYB), found in Balearica regulorum (Grey crowned-crane).